Reading from the N-terminus, the 285-residue chain is 2-dehydro-3-deoxyphosphooctonate aldolase (285 aa).

It belongs to the KdsA family.

It is found in the cytoplasm. The catalysed reaction is D-arabinose 5-phosphate + phosphoenolpyruvate + H2O = 3-deoxy-alpha-D-manno-2-octulosonate-8-phosphate + phosphate. Its pathway is carbohydrate biosynthesis; 3-deoxy-D-manno-octulosonate biosynthesis; 3-deoxy-D-manno-octulosonate from D-ribulose 5-phosphate: step 2/3. The protein operates within bacterial outer membrane biogenesis; lipopolysaccharide biosynthesis. The polypeptide is 2-dehydro-3-deoxyphosphooctonate aldolase (Acinetobacter baumannii (strain SDF)).